A 61-amino-acid chain; its full sequence is Large ribosomal subunit protein uL30 (61 aa).

It belongs to the universal ribosomal protein uL30 family. In terms of assembly, part of the 50S ribosomal subunit.

The protein is Large ribosomal subunit protein uL30 of Corynebacterium aurimucosum (strain ATCC 700975 / DSM 44827 / CIP 107346 / CN-1) (Corynebacterium nigricans).